The sequence spans 286 residues: Putative transcription factor kapC (286 aa).

Residues 1 to 10 show a composition bias toward pro residues; sequence MQPALAPAPH. The interval 1–120 is disordered; the sequence is MQPALAPAPH…QNRAAQRAFR (120 aa). The span at 26 to 40 shows a compositional bias: low complexity; it reads HDQLLAAHQHLSHPQ. The segment covering 41 to 54 has biased composition (pro residues); that stretch reads QPRPQAPATQPPHM. The span at 55–67 shows a compositional bias: polar residues; that stretch reads QPNTASPRDQNNI. Residues 81-92 show a composition bias toward pro residues; it reads PQTPPQPEPAPQ. The region spanning 102 to 165 is the bZIP domain; sequence PLSTSKRAAQ…EYIINLQTRL (64 aa). The interval 103–126 is basic motif; it reads LSTSKRAAQNRAAQRAFRQRKESY. The span at 108–118 shows a compositional bias: low complexity; the sequence is RAAQNRAAQRA. A leucine-zipper region spans residues 130 to 161; the sequence is LEEQVKHQEAITEEYKALHAENYQLREYIINL. Residues 197-286 are disordered; sequence RGNAASAGPA…QEPDGLPVVS (90 aa). The span at 198–222 shows a compositional bias: low complexity; it reads GNAASAGPAPAGPGPQQSQPNQNQG.

Belongs to the bZIP family.

The protein resides in the nucleus. Its function is as follows. Putative transcription factor. The chain is Putative transcription factor kapC (kapC) from Aspergillus terreus (strain NIH 2624 / FGSC A1156).